The primary structure comprises 279 residues: ATP synthase gamma chain (279 aa).

This sequence belongs to the ATPase gamma chain family. In terms of assembly, F-type ATPases have 2 components, CF(1) - the catalytic core - and CF(0) - the membrane proton channel. CF(1) has five subunits: alpha(3), beta(3), gamma(1), delta(1), epsilon(1). CF(0) has three main subunits: a, b and c.

The protein resides in the cell membrane. Its function is as follows. Produces ATP from ADP in the presence of a proton gradient across the membrane. The gamma chain is believed to be important in regulating ATPase activity and the flow of protons through the CF(0) complex. This Mycoplasma genitalium (strain ATCC 33530 / DSM 19775 / NCTC 10195 / G37) (Mycoplasmoides genitalium) protein is ATP synthase gamma chain.